Consider the following 182-residue polypeptide: Oligoribonuclease (182 aa).

An Exonuclease domain is found at 8 to 171 (LLWLDMEMTG…ADIYESIDEL (164 aa)). Tyr-129 is an active-site residue.

This sequence belongs to the oligoribonuclease family.

The protein resides in the cytoplasm. 3'-to-5' exoribonuclease specific for small oligoribonucleotides. The protein is Oligoribonuclease of Thiobacillus denitrificans (strain ATCC 25259 / T1).